The sequence spans 352 residues: MSDSQPLLLRAARGESVERTPVWMMRQAGRYMKVYRDLRDRYPSFRERSENPDLSYQISMQPFEAFQPDGVILFSDILTPLPGMGIDFDIVESKGPLIQKPIRSLSQIEALQPLEPNATMPFVGEVLGRLRESVGNRAAVLGFVGAPWTLAAYVVEGKSSKNYAVIKAMAFQQPDLLHRLLNHFAESIATYLRYQIDSGAQVVQMFDSWAGQLSPADYDTFAAPYQKRVVDLVKSTHPDTPMILYISGSAGVLERMGRTGVDIISLDWTVDMADGCARLPEHLGVQGNVDPGLLFGTPEAIRERIVDAVRKARGRRHILNLGHGILPGTPEDNAKVFFETGKNVDNLIGSAA.

Residues R26–R30, D76, Y153, S208, and H323 each bind substrate.

This sequence belongs to the uroporphyrinogen decarboxylase family. As to quaternary structure, homodimer.

The protein resides in the cytoplasm. The catalysed reaction is uroporphyrinogen III + 4 H(+) = coproporphyrinogen III + 4 CO2. The protein operates within porphyrin-containing compound metabolism; protoporphyrin-IX biosynthesis; coproporphyrinogen-III from 5-aminolevulinate: step 4/4. In terms of biological role, catalyzes the decarboxylation of four acetate groups of uroporphyrinogen-III to yield coproporphyrinogen-III. The sequence is that of Uroporphyrinogen decarboxylase from Prochlorococcus marinus (strain MIT 9303).